A 205-amino-acid polypeptide reads, in one-letter code: Outer-membrane lipoprotein carrier protein (205 aa).

A signal peptide spans 1 to 19 (MKKIIICFIFVFSINVSFA).

Belongs to the LolA family. In terms of assembly, monomer.

It is found in the periplasm. Functionally, participates in the translocation of lipoproteins from the inner membrane to the outer membrane. Only forms a complex with a lipoprotein if the residue after the N-terminal Cys is not an aspartate (The Asp acts as a targeting signal to indicate that the lipoprotein should stay in the inner membrane). The polypeptide is Outer-membrane lipoprotein carrier protein (Francisella tularensis subsp. tularensis (strain FSC 198)).